The primary structure comprises 318 residues: Glycine--tRNA ligase alpha subunit (318 aa).

Belongs to the class-II aminoacyl-tRNA synthetase family. In terms of assembly, tetramer of two alpha and two beta subunits.

The protein localises to the cytoplasm. The catalysed reaction is tRNA(Gly) + glycine + ATP = glycyl-tRNA(Gly) + AMP + diphosphate. This Methylibium petroleiphilum (strain ATCC BAA-1232 / LMG 22953 / PM1) protein is Glycine--tRNA ligase alpha subunit.